A 412-amino-acid polypeptide reads, in one-letter code: Peptidase T (412 aa).

H78 lines the Zn(2+) pocket. Residue D80 is part of the active site. Residue D140 participates in Zn(2+) binding. E174 functions as the Proton acceptor in the catalytic mechanism. Zn(2+)-binding residues include E175, D197, and H379.

This sequence belongs to the peptidase M20B family. Requires Zn(2+) as cofactor.

Its subcellular location is the cytoplasm. The enzyme catalyses Release of the N-terminal residue from a tripeptide.. In terms of biological role, cleaves the N-terminal amino acid of tripeptides. The chain is Peptidase T from Staphylococcus epidermidis (strain ATCC 12228 / FDA PCI 1200).